The sequence spans 321 residues: GTP 3',8-cyclase (321 aa).

Positions 5-233 (SFNRVIDYIR…QGSSKIYTLE (229 aa)) constitute a Radical SAM core domain. R14 contributes to the GTP binding site. [4Fe-4S] cluster is bound by residues C21 and C25. Y27 serves as a coordination point for S-adenosyl-L-methionine. C28 provides a ligand contact to [4Fe-4S] cluster. Residue R64 coordinates GTP. G68 contributes to the S-adenosyl-L-methionine binding site. A GTP-binding site is contributed by S95. Residue S119 participates in S-adenosyl-L-methionine binding. Position 155 (K155) interacts with GTP. Residue M189 participates in S-adenosyl-L-methionine binding. [4Fe-4S] cluster is bound by residues C249 and C252. 254–256 (RIR) provides a ligand contact to GTP. C266 serves as a coordination point for [4Fe-4S] cluster.

The protein belongs to the radical SAM superfamily. MoaA family. In terms of assembly, monomer and homodimer. Requires [4Fe-4S] cluster as cofactor.

It carries out the reaction GTP + AH2 + S-adenosyl-L-methionine = (8S)-3',8-cyclo-7,8-dihydroguanosine 5'-triphosphate + 5'-deoxyadenosine + L-methionine + A + H(+). It participates in cofactor biosynthesis; molybdopterin biosynthesis. Catalyzes the cyclization of GTP to (8S)-3',8-cyclo-7,8-dihydroguanosine 5'-triphosphate. The polypeptide is GTP 3',8-cyclase (Helicobacter pylori (strain HPAG1)).